We begin with the raw amino-acid sequence, 370 residues long: Cytochrome b (370 aa).

4 consecutive transmembrane segments (helical) span residues 25–45, 69–90, 105–125, and 170–190; these read FGSM…FLAV, WMMQ…YIHI, WFSG…GYVL, and FFAL…LHIL. Residues H75 and H89 each contribute to the heme b site. Heme b-binding residues include H174 and H188. A ubiquinone is bound at residue H193. Helical transmembrane passes span 218 to 238, 280 to 300, 312 to 332, and 339 to 358; these read YKDM…VSFF, LGGA…PFTH, FMQL…WTAT, and FTTI…ISNP.

Belongs to the cytochrome b family. As to quaternary structure, the cytochrome bc1 complex contains 3 respiratory subunits (MT-CYB, CYC1 and UQCRFS1), 2 core proteins (UQCRC1 and UQCRC2) and probably 6 low-molecular weight proteins. Heme b is required as a cofactor.

Its subcellular location is the mitochondrion inner membrane. Functionally, component of the ubiquinol-cytochrome c reductase complex (complex III or cytochrome b-c1 complex) that is part of the mitochondrial respiratory chain. The b-c1 complex mediates electron transfer from ubiquinol to cytochrome c. Contributes to the generation of a proton gradient across the mitochondrial membrane that is then used for ATP synthesis. The polypeptide is Cytochrome b (MT-CYB) (Chilabothrus strigilatus mccraniei (Ragged Island boa constrictor)).